The chain runs to 282 residues: Leucine-rich protein (282 aa).

Not essential for viability or growth. Nevertheless, uncontrolled production in E.coli is detrimental to the normal physiology of the bacteria. The sequence is that of Leucine-rich protein (lrp) from Streptococcus dysgalactiae subsp. equisimilis (Streptococcus equisimilis).